Here is a 252-residue protein sequence, read N- to C-terminus: Trans-aconitate 2-methyltransferase (252 aa).

It belongs to the methyltransferase superfamily. Tam family.

It is found in the cytoplasm. It catalyses the reaction trans-aconitate + S-adenosyl-L-methionine = (E)-3-(methoxycarbonyl)pent-2-enedioate + S-adenosyl-L-homocysteine. Catalyzes the S-adenosylmethionine monomethyl esterification of trans-aconitate. This Escherichia coli (strain ATCC 8739 / DSM 1576 / NBRC 3972 / NCIMB 8545 / WDCM 00012 / Crooks) protein is Trans-aconitate 2-methyltransferase.